The primary structure comprises 395 residues: Non-structural protein 1 (395 aa).

The DRBM domain maps to Asn-328–Phe-395.

This is Non-structural protein 1 from Homo sapiens (Human).